Consider the following 104-residue polypeptide: Large ribosomal subunit protein bL27 (104 aa).

A propeptide spanning residues 1–15 (MNNKYFLTKIDLQFF) is cleaved from the precursor.

The protein belongs to the bacterial ribosomal protein bL27 family. In terms of processing, the N-terminus is cleaved by ribosomal processing cysteine protease Prp.

This Mycoplasma pneumoniae (strain ATCC 29342 / M129 / Subtype 1) (Mycoplasmoides pneumoniae) protein is Large ribosomal subunit protein bL27.